The sequence spans 432 residues: Trigger factor (432 aa).

The PPIase FKBP-type domain maps to 161–246 (DDRVTIDFVG…LKKIENMVLP (86 aa)).

The protein belongs to the FKBP-type PPIase family. Tig subfamily.

It is found in the cytoplasm. It carries out the reaction [protein]-peptidylproline (omega=180) = [protein]-peptidylproline (omega=0). Its function is as follows. Involved in protein export. Acts as a chaperone by maintaining the newly synthesized protein in an open conformation. Functions as a peptidyl-prolyl cis-trans isomerase. In Haemophilus influenzae (strain PittEE), this protein is Trigger factor.